The chain runs to 311 residues: Phosphopantothenate--cysteine ligase (311 aa).

Alanine 2 carries the N-acetylalanine modification.

The protein belongs to the PPC synthetase family. In terms of assembly, homodimer.

The catalysed reaction is (R)-4'-phosphopantothenate + L-cysteine + ATP = N-[(R)-4-phosphopantothenoyl]-L-cysteine + AMP + diphosphate + H(+). It carries out the reaction (R)-4'-phosphopantothenate + L-cysteine + CTP = N-[(R)-4-phosphopantothenoyl]-L-cysteine + CMP + diphosphate + H(+). The protein operates within cofactor biosynthesis; coenzyme A biosynthesis; CoA from (R)-pantothenate: step 2/5. Catalyzes the second step in the biosynthesis of coenzyme A from vitamin B5, where cysteine is conjugated to 4'-phosphopantothenate to form 4-phosphopantothenoylcysteine. Has a preference for ATP over CTP as a cosubstrate. The chain is Phosphopantothenate--cysteine ligase (PPCS) from Homo sapiens (Human).